Reading from the N-terminus, the 591-residue chain is Aspartate--tRNA ligase (591 aa).

E173 is a binding site for L-aspartate. The segment at 197-200 is aspartate; it reads QLFK. R219 lines the L-aspartate pocket. Residues 219 to 221 and Q228 contribute to the ATP site; that span reads RDE. H448 serves as a coordination point for L-aspartate. E482 is an ATP binding site. R489 provides a ligand contact to L-aspartate. ATP is bound at residue 534-537; sequence GLDR.

Belongs to the class-II aminoacyl-tRNA synthetase family. Type 1 subfamily. Homodimer.

Its subcellular location is the cytoplasm. The enzyme catalyses tRNA(Asp) + L-aspartate + ATP = L-aspartyl-tRNA(Asp) + AMP + diphosphate. Its function is as follows. Catalyzes the attachment of L-aspartate to tRNA(Asp) in a two-step reaction: L-aspartate is first activated by ATP to form Asp-AMP and then transferred to the acceptor end of tRNA(Asp). This is Aspartate--tRNA ligase from Shewanella sp. (strain ANA-3).